We begin with the raw amino-acid sequence, 336 residues long: UPF0104 membrane protein MJ1595 (336 aa).

9 consecutive transmembrane segments (helical) span residues 9 to 29 (STILLIISFLFILAIMAYIGL), 40 to 60 (NPEYVILAFILQILVSVILSA), 68 to 88 (ILGYSANFKNIFLLVLMGLFI), 127 to 147 (VLDTAIFLFFTLFVIGYFVVT), 154 to 174 (YLILSWIFLFSLTAIIIYLIA), 223 to 243 (WEVVVAIFLSVMRYIFDILKL), 245 to 265 (LLFLSLSYVVSVICVSAVYLI), 285 to 305 (VMILSFSAFNIPPSVAAAVTL), and 306 to 326 (LDRLVSYILPTILGYIAMLII).

It belongs to the UPF0104 family.

Its subcellular location is the cell membrane. The chain is UPF0104 membrane protein MJ1595 from Methanocaldococcus jannaschii (strain ATCC 43067 / DSM 2661 / JAL-1 / JCM 10045 / NBRC 100440) (Methanococcus jannaschii).